The chain runs to 128 residues: Ribonuclease pancreatic (128 aa).

Residues 1–13 show a composition bias toward basic and acidic residues; it reads KESPAMKFERQHM. Residues 1-26 are disordered; that stretch reads KESPAMKFERQHMDSGSTSSSNPTYC. Substrate-binding residues include Lys-7 and Arg-10. His-12 serves as the catalytic Proton acceptor. Polar residues predominate over residues 14–26; sequence DSGSTSSSNPTYC. Cystine bridges form between Cys-26-Cys-84, Cys-40-Cys-95, Cys-58-Cys-110, and Cys-65-Cys-72. A glycan (N-linked (GlcNAc...) asparagine) is linked at Asn-34. Position 41 to 45 (41 to 45) interacts with substrate; the sequence is KPVNT. Asn-62 is a glycosylation site (N-linked (GlcNAc...) asparagine). Residues Lys-66 and Arg-85 each coordinate substrate. The Proton donor role is filled by His-119.

The protein belongs to the pancreatic ribonuclease family. As to quaternary structure, monomer. Interacts with and forms tight 1:1 complexes with RNH1. Dimerization of two such complexes may occur. Interaction with RNH1 inhibits this protein. As to expression, pancreas.

It is found in the secreted. It catalyses the reaction an [RNA] containing cytidine + H2O = an [RNA]-3'-cytidine-3'-phosphate + a 5'-hydroxy-ribonucleotide-3'-[RNA].. The catalysed reaction is an [RNA] containing uridine + H2O = an [RNA]-3'-uridine-3'-phosphate + a 5'-hydroxy-ribonucleotide-3'-[RNA].. In terms of biological role, endonuclease that catalyzes the cleavage of RNA on the 3' side of pyrimidine nucleotides. Acts on single-stranded and double-stranded RNA. The sequence is that of Ribonuclease pancreatic (RNASE1) from Equus caballus (Horse).